The following is a 591-amino-acid chain: V-type ATP synthase alpha chain (591 aa).

Residue G233–T240 participates in ATP binding.

Belongs to the ATPase alpha/beta chains family.

The catalysed reaction is ATP + H2O + 4 H(+)(in) = ADP + phosphate + 5 H(+)(out). In terms of biological role, produces ATP from ADP in the presence of a proton gradient across the membrane. The V-type alpha chain is a catalytic subunit. The polypeptide is V-type ATP synthase alpha chain (Streptococcus pyogenes serotype M49 (strain NZ131)).